Reading from the N-terminus, the 379-residue chain is Alkanesulfonate monooxygenase (379 aa).

Belongs to the SsuD family.

It catalyses the reaction an alkanesulfonate + FMNH2 + O2 = an aldehyde + FMN + sulfite + H2O + 2 H(+). Its function is as follows. Catalyzes the desulfonation of aliphatic sulfonates. The sequence is that of Alkanesulfonate monooxygenase from Pseudomonas savastanoi pv. phaseolicola (strain 1448A / Race 6) (Pseudomonas syringae pv. phaseolicola (strain 1448A / Race 6)).